A 308-amino-acid chain; its full sequence is GDP-L-colitose synthase (308 aa).

NADP(+) is bound by residues Gly-7–Gly-13 and Leu-101–Ser-104. The active-site Proton donor/acceptor is Tyr-132. Residues Lys-136, Pro-160–Leu-163, and His-176 each bind NADP(+). Substrate contacts are provided by Lys-184, Trp-199, and Arg-206.

It belongs to the NAD(P)-dependent epimerase/dehydratase family. Fucose synthase subfamily. As to quaternary structure, homodimer.

It carries out the reaction GDP-beta-L-colitose + NAD(+) = GDP-4-dehydro-3,6-dideoxy-alpha-D-mannose + NADH + H(+). The catalysed reaction is GDP-beta-L-colitose + NADP(+) = GDP-4-dehydro-3,6-dideoxy-alpha-D-mannose + NADPH + H(+). It participates in nucleotide-sugar metabolism; GDP-L-colitose biosynthesis. Involved in the biosynthesis of the L-colitose (3,6-dideoxyl-L-xylo-hexose) present in the O-antigen region of lipopolysaccharides (LPS) where it serves as antigenic determinant and are vital for bacterial defense and survival. Catalyzes the two-step NADP-dependent conversion of GDP-4-keto-3,6-dideoxy-D-mannose to GDP-L-colitose. ColC is a bifunctional enzyme catalyzing the C-5 epimerization of GDP-4-keto-3,6-dideoxy-D-mannose and the subsequent C-4 keto reduction of the resulting L-epimer to give GDP-L-colitose. It can use both NADP(+) and NAD(+) as electron acceptor, with a slight preference for NADP(+). This is GDP-L-colitose synthase from Yersinia pseudotuberculosis.